Consider the following 334-residue polypeptide: D-fructose 1,6-bisphosphatase class 2/sedoheptulose 1,7-bisphosphatase (334 aa).

Residues Asp-33, Glu-57, Asp-85, and Glu-88 each coordinate Mn(2+). Substrate contacts are provided by residues 88–90, Tyr-119, 164–166, and 186–188; these read EGT, RAR, and DGD. Position 213 (Glu-213) interacts with Mn(2+).

The protein belongs to the FBPase class 2 family. As to quaternary structure, homotetramer. Mn(2+) is required as a cofactor.

It carries out the reaction beta-D-fructose 1,6-bisphosphate + H2O = beta-D-fructose 6-phosphate + phosphate. The catalysed reaction is D-sedoheptulose 1,7-bisphosphate + H2O = D-sedoheptulose 7-phosphate + phosphate. The protein operates within carbohydrate biosynthesis; Calvin cycle. In terms of biological role, catalyzes the hydrolysis of fructose 1,6-bisphosphate (Fru 1,6-P2) and sedoheptulose 1,7-bisphosphate (Sed 1,7-P2) to fructose 6-phosphate and sedoheptulose 7-phosphate, respectively. This is D-fructose 1,6-bisphosphatase class 2/sedoheptulose 1,7-bisphosphatase from Prochlorococcus marinus (strain MIT 9303).